The primary structure comprises 479 residues: MAEQTATTTSAIDIRRFHGLLAGTAMGVYLLVLVGVTTAVTDAAAACAAWPICGNGWATPGSAIGWLAVGHRVVAVIIGICAVVTLGVGIREHIERRVLITVAVGSFLYPIQAAVGAVVAVQGPDLTLSVIHLIGGLSIFLTLAIALAWSLETETGDPTETQTTPSKPEPDQDLPPASEYDPDLPADPRDRLLATLRAYIRLTKPRLMWLLCLVASAGMTLGATTTGQLTPGIALATLGGGVLSIGASGTFNHVLERDVDRRMQRTSDRPLATDLVPVWNAIAFGILLTVISIVLFSWVNMLAAILGGVAIVFYSVVYTLLLKPNTVQNTVIGGAAGALPALIGWVAVTGDIGFGGLALATVIFLWTPAHFYNLALAYKEDYERGGFPMMPVVRGETETRKHVIWWLALTLVAAGGLATIEALGIVYAVASIVFGAVFLYFAIKLHYEQTKAAAFHSFHASNAYLGAVLIAIVFDTLVI.

Residues 1–207 (MAEQTATTTS…AYIRLTKPRL (207 aa)) form a unknown region. A run of 4 helical transmembrane segments spans residues 20 to 40 (LLAG…TTAV), 64 to 84 (IGWL…CAVV), 98 to 118 (VLIT…VGAV), and 128 to 148 (LSVI…IALA). Residues 155–164 (TGDPTETQTT) are compositionally biased toward low complexity. Residues 155–186 (TGDPTETQTTPSKPEPDQDLPPASEYDPDLPA) form a disordered region. 9 helical membrane-spanning segments follow: residues 207–227 (LMWL…TTTG), 231–251 (PGIA…SGTF), 271–291 (LATD…LTVI), 303–322 (AAIL…TLLL), 324–344 (PNTV…ALIG), 345–365 (WVAV…VIFL), 402–422 (HVIW…TIEA), 423–443 (LGIV…YFAI), and 459–479 (HASN…TLVI). The tract at residues 208–476 (MWLLCLVASA…AVLIAIVFDT (269 aa)) is protoheme IX prenyltransferase.

This sequence in the C-terminal section; belongs to the UbiA prenyltransferase family. Protoheme IX farnesyltransferase subfamily.

It is found in the cell membrane. The enzyme catalyses heme b + (2E,6E)-farnesyl diphosphate + H2O = Fe(II)-heme o + diphosphate. Its pathway is porphyrin-containing compound metabolism; heme O biosynthesis; heme O from protoheme: step 1/1. Its function is as follows. Converts heme B (protoheme IX) to heme O by substitution of the vinyl group on carbon 2 of heme B porphyrin ring with a hydroxyethyl farnesyl side group. This Haloquadratum walsbyi (strain DSM 16790 / HBSQ001) protein is Protoheme IX farnesyltransferase (ctaB).